The following is a 194-amino-acid chain: ATP-dependent Clp protease proteolytic subunit (194 aa).

The Nucleophile role is filled by serine 99. The active site involves histidine 124.

Belongs to the peptidase S14 family. Fourteen ClpP subunits assemble into 2 heptameric rings which stack back to back to give a disk-like structure with a central cavity, resembling the structure of eukaryotic proteasomes.

It localises to the cytoplasm. It catalyses the reaction Hydrolysis of proteins to small peptides in the presence of ATP and magnesium. alpha-casein is the usual test substrate. In the absence of ATP, only oligopeptides shorter than five residues are hydrolyzed (such as succinyl-Leu-Tyr-|-NHMec, and Leu-Tyr-Leu-|-Tyr-Trp, in which cleavage of the -Tyr-|-Leu- and -Tyr-|-Trp bonds also occurs).. In terms of biological role, cleaves peptides in various proteins in a process that requires ATP hydrolysis. Has a chymotrypsin-like activity. Plays a major role in the degradation of misfolded proteins. This is ATP-dependent Clp protease proteolytic subunit from Clostridium perfringens (strain ATCC 13124 / DSM 756 / JCM 1290 / NCIMB 6125 / NCTC 8237 / Type A).